We begin with the raw amino-acid sequence, 336 residues long: 4-hydroxy-3-methylbut-2-enyl diphosphate reductase (336 aa).

Positions 1–23 (MFGQRLDTLGAMSSSVSSPSPET) are disordered. Cys-36 contacts [4Fe-4S] cluster. His-65 and His-98 together coordinate (2E)-4-hydroxy-3-methylbut-2-enyl diphosphate. Residues His-65 and His-98 each contribute to the dimethylallyl diphosphate site. Isopentenyl diphosphate is bound by residues His-65 and His-98. Cys-120 contacts [4Fe-4S] cluster. His-148 is a (2E)-4-hydroxy-3-methylbut-2-enyl diphosphate binding site. His-148 is a dimethylallyl diphosphate binding site. Residue His-148 participates in isopentenyl diphosphate binding. Glu-150 (proton donor) is an active-site residue. A (2E)-4-hydroxy-3-methylbut-2-enyl diphosphate-binding site is contributed by Thr-190. Cys-220 is a binding site for [4Fe-4S] cluster. (2E)-4-hydroxy-3-methylbut-2-enyl diphosphate is bound by residues Ser-248, Ser-249, Asn-250, and Ser-293. Dimethylallyl diphosphate contacts are provided by Ser-248, Ser-249, Asn-250, and Ser-293. Positions 248, 249, 250, and 293 each coordinate isopentenyl diphosphate.

The protein belongs to the IspH family. Requires [4Fe-4S] cluster as cofactor.

The enzyme catalyses isopentenyl diphosphate + 2 oxidized [2Fe-2S]-[ferredoxin] + H2O = (2E)-4-hydroxy-3-methylbut-2-enyl diphosphate + 2 reduced [2Fe-2S]-[ferredoxin] + 2 H(+). It catalyses the reaction dimethylallyl diphosphate + 2 oxidized [2Fe-2S]-[ferredoxin] + H2O = (2E)-4-hydroxy-3-methylbut-2-enyl diphosphate + 2 reduced [2Fe-2S]-[ferredoxin] + 2 H(+). It functions in the pathway isoprenoid biosynthesis; dimethylallyl diphosphate biosynthesis; dimethylallyl diphosphate from (2E)-4-hydroxy-3-methylbutenyl diphosphate: step 1/1. It participates in isoprenoid biosynthesis; isopentenyl diphosphate biosynthesis via DXP pathway; isopentenyl diphosphate from 1-deoxy-D-xylulose 5-phosphate: step 6/6. In terms of biological role, catalyzes the conversion of 1-hydroxy-2-methyl-2-(E)-butenyl 4-diphosphate (HMBPP) into a mixture of isopentenyl diphosphate (IPP) and dimethylallyl diphosphate (DMAPP). Acts in the terminal step of the DOXP/MEP pathway for isoprenoid precursor biosynthesis. This chain is 4-hydroxy-3-methylbut-2-enyl diphosphate reductase, found in Corynebacterium efficiens (strain DSM 44549 / YS-314 / AJ 12310 / JCM 11189 / NBRC 100395).